Consider the following 114-residue polypeptide: UPF0757 protein YmgG (114 aa).

Belongs to the UPF0757 family.

This is UPF0757 protein YmgG from Edwardsiella ictaluri (strain 93-146).